An 867-amino-acid polypeptide reads, in one-letter code: RNA-directed RNA polymerase (867 aa).

249 to 256 (GLPFIGKT) lines the GTP pocket. Residues 387–591 (LIYADNIYIY…DKERLLSSAA (205 aa)) enclose the RdRp catalytic domain. The segment at 845-867 (EGALTKNARKMKKRREKARGINH) is disordered. The span at 851 to 867 (NARKMKKRREKARGINH) shows a compositional bias: basic residues.

Interacts with VP3 in the cytoplasm. May exist in multiple phosphorylated forms.

It localises to the virion. The catalysed reaction is RNA(n) + a ribonucleoside 5'-triphosphate = RNA(n+1) + diphosphate. RNA-dependent RNA polymerase which is found both free and covalently attached to the genomic RNA. May also contain guanylyl and methyl transferase activities. This chain is RNA-directed RNA polymerase (VP1), found in Blotched snakehead virus (BSNV).